A 142-amino-acid chain; its full sequence is uncharacterized protein (142 aa).

This is an uncharacterized protein from Gallid herpesvirus 2 (strain GA) (GaHV-2).